We begin with the raw amino-acid sequence, 117 residues long: MSNIIKALEQEQMKQDLPQFAPGDTVVVQVKVKEGDRERLQAFEGIVIAIRNRGLHSAFTVRKISNGEGVERTFQTHSPVVDSIEVKRRGAVRRAKLYYLRDLSGKAARIKEKLAKK.

It belongs to the bacterial ribosomal protein bL19 family.

In terms of biological role, this protein is located at the 30S-50S ribosomal subunit interface and may play a role in the structure and function of the aminoacyl-tRNA binding site. The sequence is that of Large ribosomal subunit protein bL19 from Vibrio cholerae serotype O1 (strain ATCC 39541 / Classical Ogawa 395 / O395).